The following is a 42-amino-acid chain: Photosystem I reaction center subunit IX (42 aa).

The chain crosses the membrane as a helical span at residues 8–28 (YLSTAPVLLTIWLSFTAALVI).

It belongs to the PsaJ family.

The protein localises to the plastid. It is found in the chloroplast thylakoid membrane. Its function is as follows. May help in the organization of the PsaE and PsaF subunits. This is Photosystem I reaction center subunit IX from Guillardia theta (Cryptophyte).